Consider the following 147-residue polypeptide: Bis(5'-nucleosyl)-tetraphosphatase [asymmetrical] (147 aa).

A2 is modified (N-acetylalanine). The Nudix hydrolase domain occupies 2 to 139; the sequence is ALRACGLIIF…EMKATLQEGH (138 aa). The Nudix box signature appears at 43–64; sequence GHVDPGENDLETALRETREETG.

This sequence belongs to the Nudix hydrolase family. A divalent metal cation is required as a cofactor.

It catalyses the reaction P(1),P(4)-bis(5'-guanosyl) tetraphosphate + H2O = GMP + GTP + 2 H(+). It carries out the reaction a 5'-end CoA-ribonucleoside in mRNA + H2O = a 5'-end phospho-adenosine-phospho-ribonucleoside in mRNA + (R)-4'-phosphopantetheine + 2 H(+). The enzyme catalyses a 5'-end FAD-phospho-ribonucleoside in mRNA + H2O = a 5'-end phospho-adenosine-phospho-ribonucleoside in mRNA + FMN + 2 H(+). Functionally, catalyzes the asymmetric hydrolysis of diadenosine 5',5'''-P1,P4-tetraphosphate (Ap4A) to yield AMP and ATP. Exhibits decapping activity towards FAD-capped RNAs and dpCoA-capped RNAs in vitro. The polypeptide is Bis(5'-nucleosyl)-tetraphosphatase [asymmetrical] (Nudt2) (Mus musculus (Mouse)).